We begin with the raw amino-acid sequence, 577 residues long: BAG family molecular chaperone regulator 3 (577 aa).

A compositionally biased stretch (polar residues) spans 1–17 (MSAATQSPMMQMASGNG). 3 disordered regions span residues 1–81 (MSAA…LLPI), 126–207 (TEAA…SHQL), and 229–427 (PSFH…HPGV). Ser-2 carries the post-translational modification N-acetylserine. WW domains lie at 22–56 (DPLPPGWEIKIDPQTGWPFFVDHNSRTTTWNDPRV) and 126–157 (TEAAAATPQRSQSPLRGGMTEAAQTDKQCGQM). Phosphoserine is present on Ser-138. An Omega-N-methylarginine modification is found at Arg-141. Positions 158–204 (PATATTAAAQPPTAHGPERSQSPAASDCSSSSSSASLPSSGRSSLGS) are enriched in low complexity. Residues Ser-179 and Ser-204 each carry the phosphoserine modification. The segment covering 256-265 (IQGDDWEPRP) has biased composition (basic and acidic residues). Arg-267 carries the post-translational modification Omega-N-methylarginine. 3 positions are modified to phosphoserine: Ser-280, Ser-281, and Ser-285. A Phosphothreonine modification is found at Thr-291. Ser-297 is modified (phosphoserine). Composition is skewed to pro residues over residues 332 to 341 (PAGPDLPPGH) and 376 to 392 (IPCPSPSPAPSAVPSPP). Phosphoserine is present on residues Ser-380, Ser-382, and Ser-390. The BAG domain occupies 426–503 (GVLKVEAILE…TILEKLEQKA (78 aa)). Lys-450 participates in a covalent cross-link: Glycyl lysine isopeptide (Lys-Gly) (interchain with G-Cter in SUMO1); alternate. Lys-450 participates in a covalent cross-link: Glycyl lysine isopeptide (Lys-Gly) (interchain with G-Cter in SUMO2); alternate. A disordered region spans residues 524–577 (QPLQEIMGAVVADKDKKGPENKDPQTESQQLEAKAATPPNPSNPADSAGNLVAP). The span at 535–548 (ADKDKKGPENKDPQ) shows a compositional bias: basic and acidic residues.

Forms a ternary complex with HSPA1A/HSP70 and HSPB8, serving as scaffold subunit. Component of the chaperone-assisted selective autophagy (CASA) complex consisting of BAG3, HSPA8/HSC70, HSPB8 and STUB1/CHIP. Binds to the ATPase domain of HSP70 chaperones. Interacts with BCL2. Interacts with phospholipase C-gamma proteins. Interacts with DNAJB1 and DNAJB6. Interacts (via BAG domain) with HSF1; this interaction occurs in normal and heat-shocked cells. Interacts with HSPA8/HSC70 (via NBD), HSPA1A (via NBD) and HSPA1B (via NBD). Interacts (via WW domain 1) with SYNPO2 (via PPPY motif). Interacts with HSPB8.

The protein localises to the nucleus. Its subcellular location is the cytoplasm. Its function is as follows. Co-chaperone and adapter protein that connects different classes of molecular chaperones including heat shock proteins 70 (HSP70s), e.g. HSPA1A/HSP70 or HSPA8/HSC70, and small heat shock proteins (sHSPs), e.g. HSPB8. Acts as a nucleotide-exchange factor (NEF) promoting the release of ADP from HSP70s, thereby triggering client protein release. Nucleotide release is mediated via BAG3 binding to the nucleotide-binding domain (NBD) of HSP70s, whereas client release is mediated via its binding to the substrate-binding domain (SBD). Has anti-apoptotic activity. Plays a role in the HSF1 nucleocytoplasmic transport. This chain is BAG family molecular chaperone regulator 3 (Bag3), found in Mus musculus (Mouse).